The chain runs to 339 residues: RNA polymerase principal sigma factor HrdC (339 aa).

Over residues 1–10 the composition is skewed to low complexity; the sequence is MAPTARTPTA. Disordered regions lie at residues 1 to 37 and 71 to 101; these read MAPT…EEPD and REEL…DGQE. Basic and acidic residues predominate over residues 91–101; that stretch reads TLEETVHDGQE. Residues 130–143 carry the Polymerase core binding motif; that stretch reads DVIQEGNLGLIRAV. A DNA-binding region (H-T-H motif) is located at residues 300–319; the sequence is LQQVAQHVGLTRERVRQLEK.

Belongs to the sigma-70 factor family. As to quaternary structure, interacts transiently with the RNA polymerase catalytic core.

Its function is as follows. Sigma factors are initiation factors that promote the attachment of RNA polymerase to specific initiation sites and are then released. This Streptomyces coelicolor (strain ATCC BAA-471 / A3(2) / M145) protein is RNA polymerase principal sigma factor HrdC (hrdC).